The chain runs to 239 residues: 1-(5-phosphoribosyl)-5-[(5-phosphoribosylamino)methylideneamino] imidazole-4-carboxamide isomerase (239 aa).

Aspartate 7 functions as the Proton acceptor in the catalytic mechanism. Aspartate 129 acts as the Proton donor in catalysis.

The protein belongs to the HisA/HisF family.

The protein resides in the cytoplasm. It carries out the reaction 1-(5-phospho-beta-D-ribosyl)-5-[(5-phospho-beta-D-ribosylamino)methylideneamino]imidazole-4-carboxamide = 5-[(5-phospho-1-deoxy-D-ribulos-1-ylimino)methylamino]-1-(5-phospho-beta-D-ribosyl)imidazole-4-carboxamide. It functions in the pathway amino-acid biosynthesis; L-histidine biosynthesis; L-histidine from 5-phospho-alpha-D-ribose 1-diphosphate: step 4/9. In Lactiplantibacillus plantarum (strain ATCC BAA-793 / NCIMB 8826 / WCFS1) (Lactobacillus plantarum), this protein is 1-(5-phosphoribosyl)-5-[(5-phosphoribosylamino)methylideneamino] imidazole-4-carboxamide isomerase.